Consider the following 981-residue polypeptide: RNA polymerase II assembly factor RTP1 (981 aa).

9 HEAT repeats span residues 64-101 (SNNN…LLPI), 161-199 (DTLS…ILLG), 226-261 (YTLF…RRPE), 366-403 (KELN…TTPG), 609-646 (KDVL…GEET), 655-692 (SSYK…KLQS), 765-799 (ISLE…LCEL), 800-836 (EPET…NYIQ), and 945-980 (EYNY…VLDS). Residues 630 to 651 (QEVEADSDDEVEEGEETEELDP) are compositionally biased toward acidic residues. The tract at residues 630-652 (QEVEADSDDEVEEGEETEELDPN) is disordered.

The protein belongs to the Tango6 family. Interacts with RNA polymerase II subunits RPB2 and RPB3. Interacts with the R2TP complex. Interacts with the nuclear pore complex subunits NUP100 and NUP116.

It is found in the cytoplasm. Required for the cytoplasmic assembly and the nuclear import of RNA polymerase II. May facilitate the starting interaction between RNA polymerase II subunits RPB2 and RPB3 and the subsequent interaction of the resulting complex with subunit RPB1. May also participate in the transport of RNA polymerase II through the nuclear pore complex. The polypeptide is RNA polymerase II assembly factor RTP1 (Saccharomyces cerevisiae (strain ATCC 204508 / S288c) (Baker's yeast)).